The sequence spans 106 residues: Large ribosomal subunit protein eL30 (106 aa).

Belongs to the eukaryotic ribosomal protein eL30 family.

The chain is Large ribosomal subunit protein eL30 (rpl30e) from Sulfurisphaera tokodaii (strain DSM 16993 / JCM 10545 / NBRC 100140 / 7) (Sulfolobus tokodaii).